A 113-amino-acid chain; its full sequence is Iron-sulfur cluster insertion protein ErpA (113 aa).

Iron-sulfur cluster contacts are provided by Cys-41, Cys-105, and Cys-107.

Belongs to the HesB/IscA family. As to quaternary structure, homodimer. The cofactor is iron-sulfur cluster.

Its function is as follows. Required for insertion of 4Fe-4S clusters for at least IspG. The chain is Iron-sulfur cluster insertion protein ErpA from Mannheimia succiniciproducens (strain KCTC 0769BP / MBEL55E).